Reading from the N-terminus, the 345-residue chain is Holliday junction branch migration complex subunit RuvB (345 aa).

Residues 1 to 22 (MIETDALSGGTPRRLVTQQPLS) form a disordered region. Positions 4–193 (TDALSGGTPR…FGIVARLEFY (190 aa)) are large ATPase domain (RuvB-L). ATP contacts are provided by residues Leu32, Arg33, Gly74, Lys77, Thr78, Thr79, 140 to 142 (EDY), Arg183, Tyr193, and Arg230. Thr78 contacts Mg(2+). The tract at residues 194-264 (TPEELTRIVR…VADAALSMLD (71 aa)) is small ATPAse domain (RuvB-S). The tract at residues 267-345 (PAGLDVMDRK…HFGFVPPERV (79 aa)) is head domain (RuvB-H). Residues Arg322 and Arg327 each coordinate DNA.

This sequence belongs to the RuvB family. As to quaternary structure, homohexamer. Forms an RuvA(8)-RuvB(12)-Holliday junction (HJ) complex. HJ DNA is sandwiched between 2 RuvA tetramers; dsDNA enters through RuvA and exits via RuvB. An RuvB hexamer assembles on each DNA strand where it exits the tetramer. Each RuvB hexamer is contacted by two RuvA subunits (via domain III) on 2 adjacent RuvB subunits; this complex drives branch migration. In the full resolvosome a probable DNA-RuvA(4)-RuvB(12)-RuvC(2) complex forms which resolves the HJ.

The protein localises to the cytoplasm. It catalyses the reaction ATP + H2O = ADP + phosphate + H(+). The RuvA-RuvB-RuvC complex processes Holliday junction (HJ) DNA during genetic recombination and DNA repair, while the RuvA-RuvB complex plays an important role in the rescue of blocked DNA replication forks via replication fork reversal (RFR). RuvA specifically binds to HJ cruciform DNA, conferring on it an open structure. The RuvB hexamer acts as an ATP-dependent pump, pulling dsDNA into and through the RuvAB complex. RuvB forms 2 homohexamers on either side of HJ DNA bound by 1 or 2 RuvA tetramers; 4 subunits per hexamer contact DNA at a time. Coordinated motions by a converter formed by DNA-disengaged RuvB subunits stimulates ATP hydrolysis and nucleotide exchange. Immobilization of the converter enables RuvB to convert the ATP-contained energy into a lever motion, pulling 2 nucleotides of DNA out of the RuvA tetramer per ATP hydrolyzed, thus driving DNA branch migration. The RuvB motors rotate together with the DNA substrate, which together with the progressing nucleotide cycle form the mechanistic basis for DNA recombination by continuous HJ branch migration. Branch migration allows RuvC to scan DNA until it finds its consensus sequence, where it cleaves and resolves cruciform DNA. The sequence is that of Holliday junction branch migration complex subunit RuvB from Laribacter hongkongensis (strain HLHK9).